The sequence spans 312 residues: Malate dehydrogenase (312 aa).

NAD(+) is bound by residues 7–13 (GAAGGIG) and D34. Positions 81 and 87 each coordinate substrate. NAD(+) contacts are provided by residues N94 and 117–119 (ITN). Substrate contacts are provided by N119 and R153. H177 (proton acceptor) is an active-site residue. M227 contributes to the NAD(+) binding site.

It belongs to the LDH/MDH superfamily. MDH type 1 family. In terms of assembly, homodimer.

The enzyme catalyses (S)-malate + NAD(+) = oxaloacetate + NADH + H(+). Functionally, catalyzes the reversible oxidation of malate to oxaloacetate. This chain is Malate dehydrogenase, found in Klebsiella pneumoniae (strain 342).